Here is a 327-residue protein sequence, read N- to C-terminus: Methionyl-tRNA formyltransferase (327 aa).

S118–P121 is a (6S)-5,6,7,8-tetrahydrofolate binding site.

It belongs to the Fmt family.

It carries out the reaction L-methionyl-tRNA(fMet) + (6R)-10-formyltetrahydrofolate = N-formyl-L-methionyl-tRNA(fMet) + (6S)-5,6,7,8-tetrahydrofolate + H(+). Its function is as follows. Attaches a formyl group to the free amino group of methionyl-tRNA(fMet). The formyl group appears to play a dual role in the initiator identity of N-formylmethionyl-tRNA by promoting its recognition by IF2 and preventing the misappropriation of this tRNA by the elongation apparatus. The sequence is that of Methionyl-tRNA formyltransferase from Corynebacterium jeikeium (strain K411).